Reading from the N-terminus, the 514-residue chain is Adenylosuccinate synthetase 2, chloroplastic (514 aa).

The N-terminal 56 residues, 1-56 (MAMAAAAAVASQGLLATSSQQQKKSSAKLICNAATFFSGKRLLWVKSCNNGAVGLR), are a transit peptide targeting the chloroplast. Residues 100 to 106 (GDEGKGK) and 128 to 130 (GHT) contribute to the GTP site. Residue Asp101 is the Proton acceptor of the active site. Positions 101 and 128 each coordinate Mg(2+). IMP is bound by residues 101–104 (DEGK), 126–129 (NAGH), Thr218, Arg232, Gln312, Thr327, and Arg391. The Proton donor role is filled by His129. 387–393 (TTTGRPR) contributes to the substrate binding site. GTP-binding positions include Arg393, 419–421 (KLD), and 502–504 (GVG).

It belongs to the adenylosuccinate synthetase family. In terms of assembly, homodimer. Mg(2+) is required as a cofactor.

The protein localises to the plastid. The protein resides in the chloroplast. It catalyses the reaction IMP + L-aspartate + GTP = N(6)-(1,2-dicarboxyethyl)-AMP + GDP + phosphate + 2 H(+). The protein operates within purine metabolism; AMP biosynthesis via de novo pathway; AMP from IMP: step 1/2. Its function is as follows. Plays an important role in the de novo pathway and in the salvage pathway of purine nucleotide biosynthesis. Catalyzes the first committed step in the biosynthesis of AMP from IMP. This is Adenylosuccinate synthetase 2, chloroplastic from Physcomitrium patens (Spreading-leaved earth moss).